Here is a 194-residue protein sequence, read N- to C-terminus: Transmembrane protein 212 (194 aa).

The next 5 helical transmembrane spans lie at 11 to 31 (ILVT…FPVF), 44 to 64 (IACP…LLLA), 76 to 96 (ATFT…AIAL), 99 to 119 (ALLG…NYLG), and 148 to 168 (LQAL…TVFI).

Its subcellular location is the membrane. This chain is Transmembrane protein 212 (TMEM212), found in Homo sapiens (Human).